The primary structure comprises 363 residues: Carbamoyl phosphate synthase small chain (363 aa).

CPSase regions lie at residues 1-168 (MTKR…ASPG) and 1-172 (MTKR…DGKR). L-glutamine is bound by residues Ser-46, Gly-220, and Gly-222. The Glutamine amidotransferase type-1 domain maps to 172–359 (RVVLVDYGVK…MEMMNVKEEG (188 aa)). Catalysis depends on Cys-247, which acts as the Nucleophile. L-glutamine-binding residues include Leu-248, Gln-251, Asn-289, Gly-291, and Tyr-292. Catalysis depends on residues His-332 and Glu-334.

The protein belongs to the CarA family. In terms of assembly, composed of two chains; the small (or glutamine) chain promotes the hydrolysis of glutamine to ammonia, which is used by the large (or ammonia) chain to synthesize carbamoyl phosphate. Tetramer of heterodimers (alpha,beta)4.

It catalyses the reaction hydrogencarbonate + L-glutamine + 2 ATP + H2O = carbamoyl phosphate + L-glutamate + 2 ADP + phosphate + 2 H(+). It carries out the reaction L-glutamine + H2O = L-glutamate + NH4(+). The protein operates within amino-acid biosynthesis; L-arginine biosynthesis; carbamoyl phosphate from bicarbonate: step 1/1. It functions in the pathway pyrimidine metabolism; UMP biosynthesis via de novo pathway; (S)-dihydroorotate from bicarbonate: step 1/3. In terms of biological role, small subunit of the glutamine-dependent carbamoyl phosphate synthetase (CPSase). CPSase catalyzes the formation of carbamoyl phosphate from the ammonia moiety of glutamine, carbonate, and phosphate donated by ATP, constituting the first step of 2 biosynthetic pathways, one leading to arginine and/or urea and the other to pyrimidine nucleotides. The small subunit (glutamine amidotransferase) binds and cleaves glutamine to supply the large subunit with the substrate ammonia. In Listeria innocua serovar 6a (strain ATCC BAA-680 / CLIP 11262), this protein is Carbamoyl phosphate synthase small chain.